The sequence spans 206 residues: Thymidylate kinase (206 aa).

An ATP-binding site is contributed by 10 to 17 (GIDGAGKS).

This sequence belongs to the thymidylate kinase family.

It catalyses the reaction dTMP + ATP = dTDP + ADP. In terms of biological role, phosphorylation of dTMP to form dTDP in both de novo and salvage pathways of dTTP synthesis. This chain is Thymidylate kinase (tmk), found in Neisseria meningitidis serogroup A / serotype 4A (strain DSM 15465 / Z2491).